Consider the following 437-residue polypeptide: tRNA-2-methylthio-N(6)-dimethylallyladenosine synthase (437 aa).

An MTTase N-terminal domain is found at 5–121; the sequence is KKLYIKTYGC…LPELTARAAT (117 aa). The [4Fe-4S] cluster site is built by Cys14, Cys50, Cys84, Cys159, Cys163, and Cys166. Residues 145-371 enclose the Radical SAM core domain; the sequence is AKRGPTAFLT…QALLTRQQRA (227 aa). The region spanning 374–436 is the TRAM domain; that stretch reads DAKVGTTARV…ANSLRGVLIA (63 aa).

The protein belongs to the methylthiotransferase family. MiaB subfamily. As to quaternary structure, monomer. [4Fe-4S] cluster is required as a cofactor.

The protein localises to the cytoplasm. It catalyses the reaction N(6)-dimethylallyladenosine(37) in tRNA + (sulfur carrier)-SH + AH2 + 2 S-adenosyl-L-methionine = 2-methylsulfanyl-N(6)-dimethylallyladenosine(37) in tRNA + (sulfur carrier)-H + 5'-deoxyadenosine + L-methionine + A + S-adenosyl-L-homocysteine + 2 H(+). Its function is as follows. Catalyzes the methylthiolation of N6-(dimethylallyl)adenosine (i(6)A), leading to the formation of 2-methylthio-N6-(dimethylallyl)adenosine (ms(2)i(6)A) at position 37 in tRNAs that read codons beginning with uridine. The polypeptide is tRNA-2-methylthio-N(6)-dimethylallyladenosine synthase (Dinoroseobacter shibae (strain DSM 16493 / NCIMB 14021 / DFL 12)).